We begin with the raw amino-acid sequence, 228 residues long: MKLSKDTIAILKNFASINSGILLSQGKFIMTRAVNGTTYAEANISDEIDFDVALYDLNSFLSILSLVSDDAEISMHTDGNIKIADTRSTVYWPAADKSTIVFPNKPIQFPVASVITEIKAEDLQQLLRVSRGLQIDTIAITNKDGKIVINGYNKVEDSGLTRPKYSLTLTDYDGSNNFNFVINMANMKIQPGNYKVMLWGAGDKVAAKFESSQVSYVIAMEADSTHDF.

The protein belongs to the Tevenvirinae sliding clamp family. As to quaternary structure, homotrimer. Interacts with the viral DNA polymerase; this interaction constitutes the polymerase holoenzyme. Interacts with the sliding-clamp-loader; this interaction allows the sliding-clamp-loader to open the sliding clamp. Interacts with the viral DNA ligase. Part of the replicase complex that includes the DNA polymerase, the polymerase clamp, the clamp loader complex, the single-stranded DNA binding protein, the primase, the helicase and the helicase assembly factor. Interacts with the viral RNA polymerase (RNAP). Part of the transcription activation complex containing host RNAP, the viral RNA polymerase sigma-like factor, the late transcription coactivator, and the sliding clamp.

Functionally, sliding clamp that encircles the genomic DNA and links the DNA polymerase to the template to control the processivity of DNA synthesis. Responsible for tethering the catalytic subunit of DNA polymerase to DNA during high-speed replication. Interaction with the sliding-clamp-loader opens the sliding clamp so that it can be loaded around the DNA template. During transcription, encircles the DNA and tethers host RNA polymerase (RNAP) to it. The sequence is that of Sliding clamp (45) from Escherichia coli (Bacteriophage RB69).